A 237-amino-acid polypeptide reads, in one-letter code: Fibroblast growth factor 3 (237 aa).

A signal peptide spans 1-21 (MVIIWILLLSFISCGPQVSWA). Asn83 is a glycosylation site (N-linked (GlcNAc...) asparagine).

It belongs to the heparin-binding growth factors family.

Functionally, plays an important role in the regulation of embryonic development, cell proliferation, and cell differentiation. In Xenopus laevis (African clawed frog), this protein is Fibroblast growth factor 3 (fgf3).